The chain runs to 546 residues: Chaperonin GroEL 6 (546 aa).

ATP contacts are provided by residues 30-33, K51, 87-91, G415, and D496; these read TLGP and DGTTT.

The protein belongs to the chaperonin (HSP60) family. In terms of assembly, forms a cylinder of 14 subunits composed of two heptameric rings stacked back-to-back. Interacts with the co-chaperonin GroES.

The protein resides in the cytoplasm. The catalysed reaction is ATP + H2O + a folded polypeptide = ADP + phosphate + an unfolded polypeptide.. Its function is as follows. Together with its co-chaperonin GroES, plays an essential role in assisting protein folding. The GroEL-GroES system forms a nano-cage that allows encapsulation of the non-native substrate proteins and provides a physical environment optimized to promote and accelerate protein folding. The chain is Chaperonin GroEL 6 from Bradyrhizobium diazoefficiens (strain JCM 10833 / BCRC 13528 / IAM 13628 / NBRC 14792 / USDA 110).